A 274-amino-acid polypeptide reads, in one-letter code: MITFPNAKINLGLNITEKRPDGYHNLETVFYPIPLEDALEITILNDSKQKFVLHQSGLEISGEPETNLVVKAYLLLEQEFQLPPVDIYLYKHIPSGAGLGGGSADAAFMLKLLNEKFNLHLADEKLEEYAAILGADCAFFIKNKPTFAEGIGNIFSPVDLSLKGYQLVLVKPDVFVSTRDAFSQIKPHYPDHSLKEIIRRPVSEWKNCMFNDFEKSVFPQYPVIEEIKKELYSKGAIYAAMSGSGSSVFGLFSPEEKITKMDFEAAFCFQTELK.

Residue Lys8 is part of the active site. 94–104 (PSGAGLGGGSA) is a binding site for ATP. Residue Asp136 is part of the active site.

This sequence belongs to the GHMP kinase family. IspE subfamily.

The enzyme catalyses 4-CDP-2-C-methyl-D-erythritol + ATP = 4-CDP-2-C-methyl-D-erythritol 2-phosphate + ADP + H(+). It functions in the pathway isoprenoid biosynthesis; isopentenyl diphosphate biosynthesis via DXP pathway; isopentenyl diphosphate from 1-deoxy-D-xylulose 5-phosphate: step 3/6. Functionally, catalyzes the phosphorylation of the position 2 hydroxy group of 4-diphosphocytidyl-2C-methyl-D-erythritol. In Bacteroides fragilis (strain ATCC 25285 / DSM 2151 / CCUG 4856 / JCM 11019 / LMG 10263 / NCTC 9343 / Onslow / VPI 2553 / EN-2), this protein is 4-diphosphocytidyl-2-C-methyl-D-erythritol kinase.